Reading from the N-terminus, the 330-residue chain is Diacylglycerol O-acyltransferase 2 (330 aa).

The next 2 helical transmembrane spans lie at 15-35 (LETM…IMAF) and 37-57 (LIVI…MFYF).

It belongs to the diacylglycerol acyltransferase family.

It localises to the endoplasmic reticulum membrane. The catalysed reaction is an acyl-CoA + a 1,2-diacyl-sn-glycerol = a triacyl-sn-glycerol + CoA. The enzyme catalyses all-trans-retinol + an acyl-CoA = an all-trans-retinyl ester + CoA. It catalyses the reaction 2-(9Z-octadecenoyl)-glycerol + (9Z)-octadecenoyl-CoA = 1,2-di-(9Z-octadecenoyl)-sn-glycerol + CoA. It carries out the reaction 1,2-di-(9Z-octadecenoyl)-sn-glycerol + (9Z)-octadecenoyl-CoA = 1,2,3-tri-(9Z-octadecenoyl)-glycerol + CoA. The catalysed reaction is all-trans-retinol + hexadecanoyl-CoA = all-trans-retinyl hexadecanoate + CoA. The enzyme catalyses 1-O-(9Z-octadecenyl)-glycerol + (9Z)-octadecenoyl-CoA = 1-O-(9Z-octadecyl)-3-(9Z-octadecenoyl)-glycerol + CoA. It catalyses the reaction 1-(9Z-octadecenoyl)-glycerol + (9Z)-octadecenoyl-CoA = 1,2-di-(9Z-octadecenoyl)-glycerol + CoA. It carries out the reaction 1,2-di-(9Z-octadecenoyl)-sn-glycerol + hexadecanoyl-CoA = 1,2-di-(9Z)-octadecenoyl-3-hexadecanoyl-sn-glycerol + CoA. The catalysed reaction is 1,3-di-(9Z-octadecenoyl)-glycerol + (9Z)-octadecenoyl-CoA = 1,2,3-tri-(9Z-octadecenoyl)-glycerol + CoA. The enzyme catalyses 2,3-di-(9Z)-octadecenoyl-sn-glycerol + (9Z)-octadecenoyl-CoA = 1,2,3-tri-(9Z-octadecenoyl)-glycerol + CoA. It catalyses the reaction 2-(9Z-octadecenoyl)-glycerol + hexadecanoyl-CoA = 1-hexadecanoyl-2-(9Z-octadecenoyl)-sn-glycerol + CoA. Its pathway is glycerolipid metabolism; triacylglycerol biosynthesis. In terms of biological role, catalyzes the terminal and only committed step in triacylglycerol synthesis by using diacylglycerol and fatty acyl CoA as substrates. Required for storage lipid synthesis. The polypeptide is Diacylglycerol O-acyltransferase 2 (dgat2) (Dictyostelium discoideum (Social amoeba)).